A 206-amino-acid polypeptide reads, in one-letter code: Large ribosomal subunit protein uL4 (206 aa).

Positions 48-59 are enriched in basic and acidic residues; sequence THDTKTRSEVRG. Residues 48–77 are disordered; the sequence is THDTKTRSEVRGGGRKPWRQKGTGRARHGS. The segment covering 60–77 has biased composition (basic residues); that stretch reads GGRKPWRQKGTGRARHGS.

The protein belongs to the universal ribosomal protein uL4 family. As to quaternary structure, part of the 50S ribosomal subunit.

Functionally, one of the primary rRNA binding proteins, this protein initially binds near the 5'-end of the 23S rRNA. It is important during the early stages of 50S assembly. It makes multiple contacts with different domains of the 23S rRNA in the assembled 50S subunit and ribosome. In terms of biological role, forms part of the polypeptide exit tunnel. In Pelotomaculum thermopropionicum (strain DSM 13744 / JCM 10971 / SI), this protein is Large ribosomal subunit protein uL4.